The sequence spans 359 residues: 4-hydroxy-3-methylbut-2-en-1-yl diphosphate synthase (flavodoxin) (359 aa).

[4Fe-4S] cluster is bound by residues Cys264, Cys267, Cys299, and Glu306.

The protein belongs to the IspG family. The cofactor is [4Fe-4S] cluster.

The catalysed reaction is (2E)-4-hydroxy-3-methylbut-2-enyl diphosphate + oxidized [flavodoxin] + H2O + 2 H(+) = 2-C-methyl-D-erythritol 2,4-cyclic diphosphate + reduced [flavodoxin]. The protein operates within isoprenoid biosynthesis; isopentenyl diphosphate biosynthesis via DXP pathway; isopentenyl diphosphate from 1-deoxy-D-xylulose 5-phosphate: step 5/6. Converts 2C-methyl-D-erythritol 2,4-cyclodiphosphate (ME-2,4cPP) into 1-hydroxy-2-methyl-2-(E)-butenyl 4-diphosphate. The chain is 4-hydroxy-3-methylbut-2-en-1-yl diphosphate synthase (flavodoxin) from Helicobacter pylori (strain G27).